A 338-amino-acid chain; its full sequence is Glycerol-3-phosphate dehydrogenase [NAD(P)+] (338 aa).

NADPH-binding residues include S13, W14, and K108. K108, G139, and S141 together coordinate sn-glycerol 3-phosphate. A143 is a binding site for NADPH. K194, D247, S257, R258, and N259 together coordinate sn-glycerol 3-phosphate. Catalysis depends on K194, which acts as the Proton acceptor. R258 lines the NADPH pocket. Residues V282 and E284 each contribute to the NADPH site.

The protein belongs to the NAD-dependent glycerol-3-phosphate dehydrogenase family.

It is found in the cytoplasm. It carries out the reaction sn-glycerol 3-phosphate + NAD(+) = dihydroxyacetone phosphate + NADH + H(+). It catalyses the reaction sn-glycerol 3-phosphate + NADP(+) = dihydroxyacetone phosphate + NADPH + H(+). It participates in membrane lipid metabolism; glycerophospholipid metabolism. Catalyzes the reduction of the glycolytic intermediate dihydroxyacetone phosphate (DHAP) to sn-glycerol 3-phosphate (G3P), the key precursor for phospholipid synthesis. The protein is Glycerol-3-phosphate dehydrogenase [NAD(P)+] of Streptococcus pneumoniae (strain Hungary19A-6).